The following is a 331-amino-acid chain: UDP-N-acetylenolpyruvoylglucosamine reductase (331 aa).

An FAD-binding PCMH-type domain is found at 54-221 (RVGGAAELYV…TQATFQLQPG (168 aa)). The active site involves Arg200. Ser251 serves as the catalytic Proton donor. Residue Glu321 is part of the active site.

The protein belongs to the MurB family. FAD is required as a cofactor.

The protein localises to the cytoplasm. The enzyme catalyses UDP-N-acetyl-alpha-D-muramate + NADP(+) = UDP-N-acetyl-3-O-(1-carboxyvinyl)-alpha-D-glucosamine + NADPH + H(+). It participates in cell wall biogenesis; peptidoglycan biosynthesis. Functionally, cell wall formation. The sequence is that of UDP-N-acetylenolpyruvoylglucosamine reductase from Trichormus variabilis (strain ATCC 29413 / PCC 7937) (Anabaena variabilis).